A 233-amino-acid polypeptide reads, in one-letter code: Metallo-beta-lactamase domain-containing protein 1 (233 aa).

Zn(2+)-binding residues include H96, H98, D100, H101, H152, D174, and H213.

Belongs to the metallo-beta-lactamase superfamily. Glyoxalase II family. In terms of assembly, homodimer. It depends on Zn(2+) as a cofactor.

The protein localises to the cytoplasm. It is found in the cytosol. It localises to the nucleus. It catalyses the reaction a ribonucleotidyl-ribonucleotide-RNA + H2O = a 3'-end ribonucleotide-RNA + a 5'-end 5'-phospho-ribonucleoside-RNA + H(+). Its function is as follows. Endoribonuclease that catalyzes the hydrolysis of histone-coding pre-mRNA 3'-end. Involved in histone pre-mRNA processing during the S-phase of the cell cycle, which is required for entering/progressing through S-phase. Cleaves histone pre-mRNA at a major and a minor cleavage site after the 5'-ACCCA-3' and the 5'-ACCCACA-3' sequence, respectively, and located downstream of the stem-loop. May require the presence of the HDE element located at the histone pre-RNA 3'-end to avoid non-specific cleavage. In Xenopus laevis (African clawed frog), this protein is Metallo-beta-lactamase domain-containing protein 1 (mblac1).